The following is a 200-amino-acid chain: uncharacterized protein (200 aa).

The signal sequence occupies residues 1 to 24 (MSRVFSCVLRACVCAGLCCWVCMG). A disordered region spans residues 124–200 (GGRDLPMHGA…GEGGDNGEGE (77 aa)). A compositionally biased stretch (acidic residues) spans 184–200 (LGDEGETGEGGDNGEGE).

This is an uncharacterized protein from Homo sapiens (Human).